Reading from the N-terminus, the 493-residue chain is Mitochondrial distribution and morphology protein 10 (493 aa).

Belongs to the MDM10 family. In terms of assembly, component of the ER-mitochondria encounter structure (ERMES) or MDM complex, composed of MMM1, MDM10, MDM12 and MDM34. Associates with the mitochondrial outer membrane sorting assembly machinery SAM(core) complex, which consists of SAM35, SAM37 and SAM50, to form a SAM(holo) complex.

Its subcellular location is the mitochondrion outer membrane. Functionally, component of the ERMES/MDM complex, which serves as a molecular tether to connect the endoplasmic reticulum and mitochondria. Components of this complex are involved in the control of mitochondrial shape and protein biogenesis and may function in phospholipid exchange. MDM10 is involved in the late assembly steps of the general translocase of the mitochondrial outer membrane (TOM complex). Functions in the TOM40-specific route of the assembly of outer membrane beta-barrel proteins, including the association of TOM40 with the receptor TOM22 and small TOM proteins. Can associate with the SAM(core) complex as well as the MDM12-MMM1 complex, both involved in late steps of the major beta-barrel assembly pathway, that is responsible for biogenesis of all outer membrane beta-barrel proteins. May act as a switch that shuttles between both complexes and channels precursor proteins into the TOM40-specific pathway. Plays a role in mitochondrial morphology and in the inheritance of mitochondria. The polypeptide is Mitochondrial distribution and morphology protein 10 (Saccharomyces cerevisiae (strain RM11-1a) (Baker's yeast)).